Reading from the N-terminus, the 473-residue chain is Putative malate dehydrogenase 1B (473 aa).

It belongs to the LDH/MDH superfamily. MDH type 2 family.

In Bos taurus (Bovine), this protein is Putative malate dehydrogenase 1B (MDH1B).